The following is a 50-amino-acid chain: Toxic protein HokC (50 aa).

Residues 1 to 5 are Cytoplasmic-facing; that stretch reads MKQHK. A helical; Signal-anchor for type II membrane protein transmembrane segment spans residues 6 to 24; it reads AMIVALIVICITAVVAALV. The Periplasmic segment spans residues 25 to 50; it reads TRKDLCEVHIRTGQTEVAVFTAYESE.

It belongs to the Hok/Gef family. As to quaternary structure, homodimer; disulfide-linked.

It localises to the cell inner membrane. Toxic component of a type I toxin-antitoxin (TA) system. When overexpressed kills cells within minutes; causes collapse of the transmembrane potential and arrest of respiration. Its toxic effect is probably neutralized by antisense antitoxin RNA SokC. The sequence is that of Toxic protein HokC from Escherichia coli (strain K12).